The following is a 306-amino-acid chain: uncharacterized protein (306 aa).

Residues 287–306 (DEEGKSEDAKRQEEEKKKSS) are disordered.

This sequence belongs to the aldo/keto reductase family.

It localises to the cytoplasm. Its subcellular location is the nucleus. This is an uncharacterized protein from Schizosaccharomyces pombe (strain 972 / ATCC 24843) (Fission yeast).